A 200-amino-acid polypeptide reads, in one-letter code: Ribonuclease HII (200 aa).

One can recognise an RNase H type-2 domain in the interval 9–198; it reads ALIAGVDEVG…VQRVLAQAKG (190 aa). The a divalent metal cation site is built by Asp15, Glu16, and Asp107.

The protein belongs to the RNase HII family. It depends on Mn(2+) as a cofactor. Mg(2+) is required as a cofactor.

The protein resides in the cytoplasm. It carries out the reaction Endonucleolytic cleavage to 5'-phosphomonoester.. Its function is as follows. Endonuclease that specifically degrades the RNA of RNA-DNA hybrids. This chain is Ribonuclease HII, found in Pseudoalteromonas translucida (strain TAC 125).